Reading from the N-terminus, the 215-residue chain is C-type lectin domain family 4 member D (215 aa).

The Cytoplasmic segment spans residues 1-17 (MGLEKPQSKLEGGMHPQ). The chain crosses the membrane as a helical; Signal-anchor for type II membrane protein span at residues 18-38 (LIPSVIAVVFILLLSVCFIAS). Residues 39–215 (CLVTHHNFSR…ICKIPGTTLN (177 aa)) are Extracellular-facing. N-linked (GlcNAc...) asparagine glycosylation is present at asparagine 45. A disulfide bridge links cysteine 84 with cysteine 95. Residues 91-208 (FQSNCYFPLT…CNFEASRICK (118 aa)) form the C-type lectin domain. Asparagine 102 and asparagine 111 each carry an N-linked (GlcNAc...) asparagine glycan. Intrachain disulfides connect cysteine 112–cysteine 207 and cysteine 182–cysteine 199. Ca(2+) is bound by residues glutamate 173, aspartate 175, asparagine 195, and aspartate 196.

In terms of assembly, heterodimer with CLEC4E; disulfide-linked. CLEC4E acts as a bridge for interaction between CLEC4D and FCER1G to form a functional complex. Heterodimer with CLEC6A; this heterodimer forms a pattern recognition receptor (PRR) against fungal infection. Expressed weakly in peripheral blood leukocytes, bone marrow and spleen. Expression is confined mostly in monocytes and macrophage and seems to be up-regulated by IL-6, IL-10, TNF-alpha and IFN-gamma.

The protein resides in the cell membrane. Its function is as follows. Calcium-dependent lectin that acts as a pattern recognition receptor (PRR) of the innate immune system: recognizes damage-associated molecular patterns (DAMPs) of pathogen-associated molecular patterns (PAMPs) of bacteria and fungi. The PAMPs include alpha-mannans on C.albicans hypheas and mycobacterial trehalose 6,6'-dimycolate (TDM). Interacts with signaling adapter Fc receptor gamma chain/FCER1G, likely via CLEC4E, to form a functional complex in myeloid cells. Binding of mycobacterial TDM or C.albicans alpha-mannans to this receptor complex leads to phosphorylation of the immunoreceptor tyrosine-based activation motif (ITAM) of FCER1G, triggering activation of SYK, CARD9 and NF-kappa-B, consequently driving maturation of antigen-presenting cells and shaping antigen-specific priming of T-cells toward effector T-helper 1 and T-helper 17 cell subtypes. The heterodimer formed with CLEC6A is active against fungal infection. Functions as an endocytic receptor. May be involved in antigen uptake at the site of infection, either for clearance of the antigen, or for processing and further presentation to T-cells. The polypeptide is C-type lectin domain family 4 member D (Homo sapiens (Human)).